We begin with the raw amino-acid sequence, 294 residues long: Extracellular metalloprotease TRV_07111 (294 aa).

An N-terminal signal peptide occupies residues 1-19 (MRFSVVFAAIAALSSVVTA). Residues asparagine 49, asparagine 54, and asparagine 74 are each glycosylated (N-linked (GlcNAc...) asparagine). Residue histidine 185 participates in Zn(2+) binding. Glutamate 186 is a catalytic residue. Histidine 189 contributes to the Zn(2+) binding site. A disulfide bond links cysteine 224 and cysteine 250.

It belongs to the peptidase M43B family.

Its subcellular location is the secreted. In terms of biological role, secreted metalloproteinase that allows assimilation of proteinaceous substrates. Plays a pivotal role as a pathogenicity determinant during infections and contributes to the ability of the pathogen to persist within the mammalian host. This is Extracellular metalloprotease TRV_07111 from Trichophyton verrucosum (strain HKI 0517).